The chain runs to 732 residues: Polyribonucleotide nucleotidyltransferase (732 aa).

Mg(2+) contacts are provided by Asp-503 and Asp-509. In terms of domain architecture, KH spans 570–629 (PRLTSIQIPVDAIGLIIGKGGETIRSITEETGAEINIEDDGTVTIACSSPEGTNAAVETI). Residues 639–713 (GNTYLGKVRD…GKNRFALSIK (75 aa)) form the S1 motif domain. The interval 710 to 732 (LSIKAVESEPEKSDENKAGTEGN) is disordered. Over residues 715–732 (VESEPEKSDENKAGTEGN) the composition is skewed to basic and acidic residues.

This sequence belongs to the polyribonucleotide nucleotidyltransferase family. Requires Mg(2+) as cofactor.

It localises to the cytoplasm. It catalyses the reaction RNA(n+1) + phosphate = RNA(n) + a ribonucleoside 5'-diphosphate. Its function is as follows. Involved in mRNA degradation. Catalyzes the phosphorolysis of single-stranded polyribonucleotides processively in the 3'- to 5'-direction. This Chlorobium phaeobacteroides (strain DSM 266 / SMG 266 / 2430) protein is Polyribonucleotide nucleotidyltransferase.